The primary structure comprises 336 residues: Inositol 2-dehydrogenase (336 aa).

The protein belongs to the Gfo/Idh/MocA family. Homotetramer.

It catalyses the reaction myo-inositol + NAD(+) = scyllo-inosose + NADH + H(+). In terms of biological role, involved in the oxidation of myo-inositol (MI) to 2-keto-myo-inositol (2KMI or 2-inosose). The polypeptide is Inositol 2-dehydrogenase (Pseudomonas syringae pv. syringae (strain B728a)).